The chain runs to 205 residues: MIGRLRGLLVEKQAPEILLEVQGLGYEVQMPLTSFYELPELNQEAIVYTHFVVREDAQLLYGFITKQERALFRLLIKTNGVGPKLALTILSGMTASEFVACVERDDIATLVKLPGVGKKTAERLLVEMRDKLKSLMEASAGSEREFMLKSNYTPAPVINTAEEDAIAALLSLGYKPAQASKAVSAVYQDGMDSETLIKSSLKSML.

The domain I stretch occupies residues 1–64; sequence MIGRLRGLLV…EDAQLLYGFI (64 aa). Residues 65–143 are domain II; it reads TKQERALFRL…SLMEASAGSE (79 aa). Residues 144-156 are flexible linker; the sequence is REFMLKSNYTPAP. Residues 157 to 205 are domain III; sequence VINTAEEDAIAALLSLGYKPAQASKAVSAVYQDGMDSETLIKSSLKSML.

Belongs to the RuvA family. As to quaternary structure, homotetramer. Forms an RuvA(8)-RuvB(12)-Holliday junction (HJ) complex. HJ DNA is sandwiched between 2 RuvA tetramers; dsDNA enters through RuvA and exits via RuvB. An RuvB hexamer assembles on each DNA strand where it exits the tetramer. Each RuvB hexamer is contacted by two RuvA subunits (via domain III) on 2 adjacent RuvB subunits; this complex drives branch migration. In the full resolvosome a probable DNA-RuvA(4)-RuvB(12)-RuvC(2) complex forms which resolves the HJ.

Its subcellular location is the cytoplasm. The RuvA-RuvB-RuvC complex processes Holliday junction (HJ) DNA during genetic recombination and DNA repair, while the RuvA-RuvB complex plays an important role in the rescue of blocked DNA replication forks via replication fork reversal (RFR). RuvA specifically binds to HJ cruciform DNA, conferring on it an open structure. The RuvB hexamer acts as an ATP-dependent pump, pulling dsDNA into and through the RuvAB complex. HJ branch migration allows RuvC to scan DNA until it finds its consensus sequence, where it cleaves and resolves the cruciform DNA. The chain is Holliday junction branch migration complex subunit RuvA from Shewanella sediminis (strain HAW-EB3).